A 500-amino-acid chain; its full sequence is 4-aminobutyrate aminotransferase, mitochondrial (500 aa).

Residues 1 to 28 (MASMLVAQRLACSFQHSYRLLVPGSRHI) constitute a mitochondrion transit peptide. Residue Cys163 coordinates [2Fe-2S] cluster. 164 to 165 (GS) is a pyridoxal 5'-phosphate binding site. Position 166 (Cys166) interacts with [2Fe-2S] cluster. Arg220 provides a ligand contact to substrate. Lys231 bears the N6-succinyllysine mark. Lys252 carries the N6-acetyllysine; alternate modification. Residue Lys252 is modified to N6-succinyllysine; alternate. Lys279 and Lys318 each carry N6-acetyllysine. Lys357 is modified (N6-(pyridoxal phosphate)lysine). Thr381 contacts pyridoxal 5'-phosphate. Position 413 is an N6-acetyllysine; alternate (Lys413). At Lys413 the chain carries N6-succinyllysine; alternate. Residues Lys452 and Lys470 each carry the N6-acetyllysine modification.

It belongs to the class-III pyridoxal-phosphate-dependent aminotransferase family. Homodimer; disulfide-linked. Pyridoxal 5'-phosphate serves as cofactor. The cofactor is [2Fe-2S] cluster.

It is found in the mitochondrion matrix. The enzyme catalyses 4-aminobutanoate + 2-oxoglutarate = succinate semialdehyde + L-glutamate. The catalysed reaction is (S)-3-amino-2-methylpropanoate + 2-oxoglutarate = 2-methyl-3-oxopropanoate + L-glutamate. Catalyzes the conversion of gamma-aminobutyrate and L-beta-aminoisobutyrate to succinate semialdehyde and methylmalonate semialdehyde, respectively. Can also convert delta-aminovalerate and beta-alanine. The protein is 4-aminobutyrate aminotransferase, mitochondrial (ABAT) of Bos taurus (Bovine).